The sequence spans 555 residues: Probable beta-glucosidase btgE (555 aa).

Residues 1 to 18 (MRGAILATAAAFAGTAVA) form the signal peptide. Disordered stretches follow at residues 92 to 114 (TSSA…VTLP) and 263 to 290 (TTSA…PTGA). Residues 263-288 (TTSAASTTTAVPSSSTTTSSATSVPT) are compositionally biased toward low complexity. The Proton donor role is filled by Glu392. The active-site Nucleophile is Glu488.

This sequence belongs to the glycosyl hydrolase 17 family.

The protein localises to the secreted. The protein resides in the cell wall. It catalyses the reaction Hydrolysis of terminal, non-reducing beta-D-glucosyl residues with release of beta-D-glucose.. It functions in the pathway glycan metabolism; cellulose degradation. Its function is as follows. Beta-glucosidases are one of a number of cellulolytic enzymes involved in the degradation of cellulosic biomass. Catalyzes the last step releasing glucose from the inhibitory cellobiose. The chain is Probable beta-glucosidase btgE (btgE) from Emericella nidulans (strain FGSC A4 / ATCC 38163 / CBS 112.46 / NRRL 194 / M139) (Aspergillus nidulans).